The sequence spans 495 residues: MEYLLSIDQGTTSSRATLYAASGETLATVSRPLVQHYPNPGWVEHAAQEIWEGQLACIAEAIAKAGIAPAKVAGIGITNQRETTVVWERETGEPLHRAIVWQDRRTAELTESLKEQGLEAMVRERTGLLLDPYFSASKLSWLLDRVDGLRRRAERGEVCFGTIDSWLMFKLSGGKSHLTDISNASRTMLFNINTLEWDEELLRLFRIPRGMLPEVRGSAAGFGHTSAQVAGAEIPIAGVAGDQQAALFGQGCFAPGMAKATFGTGAFVVMNSGARLGVGDGVLSTIAWQLPGEAVQYALEGSIFIAGAAVQWLQEGLGLIASAREVEALAASVSDSAGVYFVPALSGLGTPYWDPYARGVIAGLTRGSTKAHLARAALEAIAFQTLDAIRAMEKASGIALKELRVDGGAAADNLLLQIQADLLGVPVLRPRCTESTSLGAAFLAGIGAGVLDTSAIAAQWALDRRFEPQMERNLREELHRGWQKCVRLSLGWEKN.

ADP is bound at residue Thr-11. 3 residues coordinate ATP: Thr-11, Thr-12, and Ser-13. Thr-11 is a sn-glycerol 3-phosphate binding site. Position 15 (Arg-15) interacts with ADP. The sn-glycerol 3-phosphate site is built by Arg-81, Glu-82, Tyr-133, and Asp-242. 5 residues coordinate glycerol: Arg-81, Glu-82, Tyr-133, Asp-242, and Gln-243. ADP contacts are provided by Thr-264 and Gly-307. ATP contacts are provided by Thr-264, Gly-307, Gln-311, and Gly-408. Gly-408 lines the ADP pocket.

The protein belongs to the FGGY kinase family.

The catalysed reaction is glycerol + ATP = sn-glycerol 3-phosphate + ADP + H(+). The protein operates within polyol metabolism; glycerol degradation via glycerol kinase pathway; sn-glycerol 3-phosphate from glycerol: step 1/1. With respect to regulation, inhibited by fructose 1,6-bisphosphate (FBP). In terms of biological role, key enzyme in the regulation of glycerol uptake and metabolism. Catalyzes the phosphorylation of glycerol to yield sn-glycerol 3-phosphate. The polypeptide is Glycerol kinase (Geobacter sp. (strain M21)).